The sequence spans 297 residues: Phosphatidylserine decarboxylase proenzyme (297 aa).

Catalysis depends on charge relay system; for autoendoproteolytic cleavage activity residues Asp100, His157, and Ser263. The Schiff-base intermediate with substrate; via pyruvic acid; for decarboxylase activity role is filled by Ser263. Ser263 is subject to Pyruvic acid (Ser); by autocatalysis.

The protein belongs to the phosphatidylserine decarboxylase family. PSD-B subfamily. Prokaryotic type I sub-subfamily. In terms of assembly, heterodimer of a large membrane-associated beta subunit and a small pyruvoyl-containing alpha subunit. The cofactor is pyruvate. Is synthesized initially as an inactive proenzyme. Formation of the active enzyme involves a self-maturation process in which the active site pyruvoyl group is generated from an internal serine residue via an autocatalytic post-translational modification. Two non-identical subunits are generated from the proenzyme in this reaction, and the pyruvate is formed at the N-terminus of the alpha chain, which is derived from the carboxyl end of the proenzyme. The autoendoproteolytic cleavage occurs by a canonical serine protease mechanism, in which the side chain hydroxyl group of the serine supplies its oxygen atom to form the C-terminus of the beta chain, while the remainder of the serine residue undergoes an oxidative deamination to produce ammonia and the pyruvoyl prosthetic group on the alpha chain. During this reaction, the Ser that is part of the protease active site of the proenzyme becomes the pyruvoyl prosthetic group, which constitutes an essential element of the active site of the mature decarboxylase.

Its subcellular location is the cell membrane. It carries out the reaction a 1,2-diacyl-sn-glycero-3-phospho-L-serine + H(+) = a 1,2-diacyl-sn-glycero-3-phosphoethanolamine + CO2. It functions in the pathway phospholipid metabolism; phosphatidylethanolamine biosynthesis; phosphatidylethanolamine from CDP-diacylglycerol: step 2/2. Its function is as follows. Catalyzes the formation of phosphatidylethanolamine (PtdEtn) from phosphatidylserine (PtdSer). This is Phosphatidylserine decarboxylase proenzyme from Glaesserella parasuis serovar 5 (strain SH0165) (Haemophilus parasuis).